Reading from the N-terminus, the 331-residue chain is Glycerol-3-phosphate dehydrogenase [NAD(P)+] (331 aa).

Tryptophan 13, arginine 33, and lysine 103 together coordinate NADPH. Lysine 103, glycine 131, and threonine 133 together coordinate sn-glycerol 3-phosphate. Residue alanine 135 coordinates NADPH. Residues lysine 187, aspartate 240, serine 250, arginine 251, and asparagine 252 each contribute to the sn-glycerol 3-phosphate site. The Proton acceptor role is filled by lysine 187. Arginine 251 lines the NADPH pocket. Valine 275 and glutamate 277 together coordinate NADPH.

It belongs to the NAD-dependent glycerol-3-phosphate dehydrogenase family.

Its subcellular location is the cytoplasm. The catalysed reaction is sn-glycerol 3-phosphate + NAD(+) = dihydroxyacetone phosphate + NADH + H(+). It carries out the reaction sn-glycerol 3-phosphate + NADP(+) = dihydroxyacetone phosphate + NADPH + H(+). It functions in the pathway membrane lipid metabolism; glycerophospholipid metabolism. Its function is as follows. Catalyzes the reduction of the glycolytic intermediate dihydroxyacetone phosphate (DHAP) to sn-glycerol 3-phosphate (G3P), the key precursor for phospholipid synthesis. This Novosphingobium aromaticivorans (strain ATCC 700278 / DSM 12444 / CCUG 56034 / CIP 105152 / NBRC 16084 / F199) protein is Glycerol-3-phosphate dehydrogenase [NAD(P)+].